An 871-amino-acid chain; its full sequence is Alanine--tRNA ligase (871 aa).

The Zn(2+) site is built by H561, H565, C665, and H669.

It belongs to the class-II aminoacyl-tRNA synthetase family. Zn(2+) is required as a cofactor.

The protein localises to the cytoplasm. It catalyses the reaction tRNA(Ala) + L-alanine + ATP = L-alanyl-tRNA(Ala) + AMP + diphosphate. Catalyzes the attachment of alanine to tRNA(Ala) in a two-step reaction: alanine is first activated by ATP to form Ala-AMP and then transferred to the acceptor end of tRNA(Ala). Also edits incorrectly charged Ser-tRNA(Ala) and Gly-tRNA(Ala) via its editing domain. In Dehalococcoides mccartyi (strain CBDB1), this protein is Alanine--tRNA ligase.